Here is a 254-residue protein sequence, read N- to C-terminus: Hydroxyacylglutathione hydrolase (254 aa).

7 residues coordinate Zn(2+): His-54, His-56, Asp-58, His-59, His-111, Asp-130, and His-168.

Belongs to the metallo-beta-lactamase superfamily. Glyoxalase II family. In terms of assembly, monomer. Requires Zn(2+) as cofactor.

It carries out the reaction an S-(2-hydroxyacyl)glutathione + H2O = a 2-hydroxy carboxylate + glutathione + H(+). Its pathway is secondary metabolite metabolism; methylglyoxal degradation; (R)-lactate from methylglyoxal: step 2/2. Functionally, thiolesterase that catalyzes the hydrolysis of S-D-lactoyl-glutathione to form glutathione and D-lactic acid. This is Hydroxyacylglutathione hydrolase from Legionella pneumophila (strain Lens).